Here is a 277-residue protein sequence, read N- to C-terminus: Formamidopyrimidine-DNA glycosylase (277 aa).

Pro-2 functions as the Schiff-base intermediate with DNA in the catalytic mechanism. The active-site Proton donor is Glu-3. Lys-59 (proton donor; for beta-elimination activity) is an active-site residue. Residues His-96, Arg-115, and Arg-158 each contribute to the DNA site. Residues Trp-243 to Lys-277 form an FPG-type zinc finger. The active-site Proton donor; for delta-elimination activity is the Arg-267.

The protein belongs to the FPG family. As to quaternary structure, monomer. Zn(2+) serves as cofactor.

The enzyme catalyses Hydrolysis of DNA containing ring-opened 7-methylguanine residues, releasing 2,6-diamino-4-hydroxy-5-(N-methyl)formamidopyrimidine.. It carries out the reaction 2'-deoxyribonucleotide-(2'-deoxyribose 5'-phosphate)-2'-deoxyribonucleotide-DNA = a 3'-end 2'-deoxyribonucleotide-(2,3-dehydro-2,3-deoxyribose 5'-phosphate)-DNA + a 5'-end 5'-phospho-2'-deoxyribonucleoside-DNA + H(+). Functionally, involved in base excision repair of DNA damaged by oxidation or by mutagenic agents. Acts as a DNA glycosylase that recognizes and removes damaged bases. Has a preference for oxidized purines, such as 7,8-dihydro-8-oxoguanine (8-oxoG). Has AP (apurinic/apyrimidinic) lyase activity and introduces nicks in the DNA strand. Cleaves the DNA backbone by beta-delta elimination to generate a single-strand break at the site of the removed base with both 3'- and 5'-phosphates. This Heliobacterium modesticaldum (strain ATCC 51547 / Ice1) protein is Formamidopyrimidine-DNA glycosylase.